The sequence spans 239 residues: Carboxy-S-adenosyl-L-methionine synthase (239 aa).

S-adenosyl-L-methionine contacts are provided by residues tyrosine 35, 64-66 (GCS), 88-89 (DN), and arginine 195.

The protein belongs to the class I-like SAM-binding methyltransferase superfamily. Cx-SAM synthase family. As to quaternary structure, homodimer.

The enzyme catalyses prephenate + S-adenosyl-L-methionine = carboxy-S-adenosyl-L-methionine + 3-phenylpyruvate + H2O. Catalyzes the conversion of S-adenosyl-L-methionine (SAM) to carboxy-S-adenosyl-L-methionine (Cx-SAM). In Helicobacter pylori (strain Shi470), this protein is Carboxy-S-adenosyl-L-methionine synthase.